The sequence spans 274 residues: Large ribosomal subunit protein uL2 (274 aa).

Residues 224-259 (AMNPVDHPHGGGEGRTSGGRHPVTPWGIPTKGYKTR) form a disordered region.

Belongs to the universal ribosomal protein uL2 family. In terms of assembly, part of the 50S ribosomal subunit. Forms a bridge to the 30S subunit in the 70S ribosome.

One of the primary rRNA binding proteins. Required for association of the 30S and 50S subunits to form the 70S ribosome, for tRNA binding and peptide bond formation. It has been suggested to have peptidyltransferase activity; this is somewhat controversial. Makes several contacts with the 16S rRNA in the 70S ribosome. This is Large ribosomal subunit protein uL2 from Geobacter sp. (strain M21).